Consider the following 199-residue polypeptide: Putative AgrB-like protein (199 aa).

The next 5 helical transmembrane spans lie at 43 to 63 (IIIFLVFLFIKEIPLFLFSFI), 81 to 101 (YGCLTCSILYFMIILLFTRLF), 108 to 128 (FYIVFFILSLAITFIFAPCPN), 139 to 159 (LKILSLISLTFWIILFYLSPL), and 165 to 185 (ILISIFLQIIQVIIINTKGVI).

The protein belongs to the AgrB family.

It localises to the cell membrane. In terms of biological role, may be involved in the proteolytic processing of a quorum sensing system signal molecule precursor. The polypeptide is Putative AgrB-like protein (cfg02) (Clostridium beijerinckii (Clostridium MP)).